Consider the following 1984-residue polypeptide: Sodium channel protein type 9 subunit alpha (1984 aa).

The Cytoplasmic segment spans residues 1–125 (MAMLPPPGPQ…RRISIKILVH (125 aa)). Residues 26–39 (RISEEKAKEHKDEK) are compositionally biased toward basic and acidic residues. A disordered region spans residues 26–55 (RISEEKAKEHKDEKKDDEEEGPKPSSDLEA). An I repeat occupies 112-410 (FSPLRRISIK…VAMAYEEQNQ (299 aa)). Residues 126–145 (SLFSMLIMCTILTNCIFMTL) traverse the membrane as a helical segment. Residues 146–150 (SNPPE) lie on the Extracellular side of the membrane. The helical transmembrane segment at 151–172 (WTKNVEYTFTGIYTFESLIKIL) threads the bilayer. Topologically, residues 173-185 (ARGFCVGEFTFLR) are cytoplasmic. The helical transmembrane segment at 186–204 (DPWNWLDFVVIVFAYLTEF) threads the bilayer. The Extracellular portion of the chain corresponds to 205-210 (VNLGNV). A glycan (N-linked (GlcNAc...) asparagine) is linked at N209. The helical transmembrane segment at 211–227 (SALRTFRVLRALKTISV) threads the bilayer. Over 228 to 241 (IPGLKTIVGALIQS) the chain is Cytoplasmic. A helical membrane pass occupies residues 242–267 (VKKLSDVMILTVFCLSVFALIGLQLF). The Extracellular segment spans residues 268–346 (MGNLKHKCFR…PDYGYTSFDT (79 aa)). C275 and C324 are disulfide-bonded. A glycan (N-linked (GlcNAc...) asparagine) is linked at N283. Residues 347–363 (FSWAFLALFRLMTQDYW) constitute an intramembrane region (pore-forming). Residues 364-376 (ENLYQQTLRAAGK) are Extracellular-facing. A helical transmembrane segment spans residues 377-402 (TYMIFFVVVIFLGSFYLINLILAVVA). Residues 403–744 (MAYEEQNQAN…LIYFIVMDPF (342 aa)) lie on the Cytoplasmic side of the membrane. The span at 461–471 (SSSETSRLSSK) shows a compositional bias: low complexity. 2 disordered regions span residues 461–542 (SSSE…RGSL) and 576–609 (IFGD…RSPP). Over residues 474-486 (KERRNRRKKKKQK) the composition is skewed to basic residues. Basic and acidic residues predominate over residues 489–509 (SGEEKGDDEKLSKSGSEESIR). The II repeat unit spans residues 725-988 (CSPYWIKFKK…EEDTDANNLQ (264 aa)). The chain crosses the membrane as a helical span at residues 745–761 (VDLAITICIVLNTLFMA). Topologically, residues 762–770 (MEHHPMTEE) are extracellular. The chain crosses the membrane as a helical span at residues 771–795 (FKNVLAVGNLIFTGIFAAEMVLKLI). Residues 796-804 (AMDPYEYFQ) are Cytoplasmic-facing. The helical transmembrane segment at 805-821 (VGWNIFDSLIVTLSLIE) threads the bilayer. The Extracellular segment spans residues 822-830 (LFLADVEGL). A helical transmembrane segment spans residues 831-847 (SVLRSFRLLRVFKLAKS). The Cytoplasmic segment spans residues 848–864 (WPTLNMLIKIIGNSVGA). Residues 865–887 (LGNLTLVLAIIVFIFAVVGMQLF) form a helical membrane-spanning segment. Residues 888-914 (GKSYKECVCKINVDCKLPRWHMNDFFH) lie on the Extracellular side of the membrane. A disulfide bridge links C896 with C902. The segment at residues 915–927 (SFLIVFRVLCGEW) is an intramembrane region (pore-forming). The Extracellular segment spans residues 928–939 (IETMWDCMEVAG). The cysteines at positions 934 and 943 are disulfide-linked. A helical transmembrane segment spans residues 940–966 (QTMCLIVYMMVMVIGNLVVLNLFLALL). Residues 967-1185 (LSSFSSDNLT…WWTIRKTCYR (219 aa)) are Cytoplasmic-facing. Disordered stretches follow at residues 1015-1040 (KKPK…ISNR) and 1103-1145 (EELS…EPVN). Residues 1019 to 1035 (GSKDTKRTADPNNKKEN) are compositionally biased toward basic and acidic residues. The span at 1135–1145 (GEEEAEAEPVN) shows a compositional bias: acidic residues. The III repeat unit spans residues 1178-1486 (TIRKTCYRIV…KKYYNAMKKL (309 aa)). A helical membrane pass occupies residues 1186–1210 (IVEHSWFESFIVLMILLSSGALAFE). Residues 1211–1222 (DIYIEKKKTIKI) lie on the Extracellular side of the membrane. A helical transmembrane segment spans residues 1223-1248 (ILEYADKIFTYIFILEMLLKWVAYGY). Topologically, residues 1249 to 1250 (KT) are cytoplasmic. The chain crosses the membrane as a helical span at residues 1251–1276 (YFTNAWCWLDFLIVDVSLVTLVANTL). Over 1277–1285 (GYSDLGPIK) the chain is Extracellular. Residues 1286 to 1302 (SLRTLRALRPLRALSRF) form a helical membrane-spanning segment. Over 1303 to 1315 (EGMRVVVNALIGA) the chain is Cytoplasmic. Residues 1316–1340 (IPSIMNVLLVCLIFWLIFSIMGVNL) form a helical membrane-spanning segment. Residues 1341–1392 (FAGKFYECVNTTDGSRFPTSQVANRSECFALMNVSGNVRWKNLKVNFDNVGL) are Extracellular-facing. A disulfide bridge connects residues C1348 and C1368. N-linked (GlcNAc...) asparagine glycosylation is found at N1350, N1364, and N1373. Positions 1393-1403 (GYLSLLQVATF) form an intramembrane region, pore-forming. At 1404–1429 (KGWMDIMYAAVDSVNVNEQPKYEYSL) the chain is on the extracellular side. The chain crosses the membrane as a helical span at residues 1430–1455 (YMYIYFVIFIIFGSFFTLNLFIGVII). The Cytoplasmic portion of the chain corresponds to 1456 to 1512 (DNFNQQKKKLGGQDIFMTEEQKKYYNAMKKLGSKKPQKPIPRPGNKFQGCIFDLVTN). S1488 bears the Phosphoserine; by PKC mark. One copy of the IV repeat lies at 1495–1793 (IPRPGNKFQG…WEKFDPDATQ (299 aa)). Residues 1513 to 1532 (QAFDITIMVLICLNMVTMMV) traverse the membrane as a helical segment. Residues 1533 to 1543 (EKEGQTEYMDY) are Extracellular-facing. The helical transmembrane segment at 1544–1565 (VLHWINMVFIILFTGECVLKLI) threads the bilayer. The Cytoplasmic segment spans residues 1566–1574 (SLRHYYFTV). The chain crosses the membrane as a helical span at residues 1575–1596 (GWNIFDFVVVILSIVGMFLAEM). Topologically, residues 1597–1605 (IEKYFVSPT) are extracellular. A helical membrane pass occupies residues 1606–1625 (LFRVIRLARIGRILRLIKGA). Residues 1626-1638 (KGIRTLLFALMMS) lie on the Cytoplasmic side of the membrane. Residues 1639–1661 (LPALFNIGLLLFLVMFIYAIFGM) form a helical membrane-spanning segment. The Extracellular portion of the chain corresponds to 1662-1684 (SNFAYVKKEAGINDMFNFETFGN). Residues 1685–1697 (SMICLFQITTSAG) constitute an intramembrane region (pore-forming). Residues 1698-1731 (WDGLLAPILNSAPPDCDPKKVHPGSSVEGDCGNP) are Extracellular-facing. The cysteines at positions 1713 and 1728 are disulfide-linked. The chain crosses the membrane as a helical span at residues 1732–1757 (SVGIFYFVSYIIISFLVVVNMYIAVI). Over 1758–1984 (LENFSVATEE…EDKEKDESRK (227 aa)) the chain is Cytoplasmic. The IQ domain maps to 1887–1916 (EEVSATIIQRAYRRYRLRQHVKNISSIYIK). Positions 1916-1930 (KDGDRDDDLPNKEDT) are enriched in basic and acidic residues. The tract at residues 1916–1984 (KDGDRDDDLP…EDKEKDESRK (69 aa)) is disordered. Residues 1946–1958 (VTASTISPPSYDS) are compositionally biased toward polar residues. Residues 1960–1984 (TKPDQEKYETDKTEKEDKEKDESRK) are compositionally biased toward basic and acidic residues.

The protein belongs to the sodium channel (TC 1.A.1.10) family. Nav1.7/SCN9A subfamily. The Nav1.7 voltage-gated sodium channel consists of an ion-conducting alpha subunit SCN9A which is functional on its own regulated by one or more beta-1 (SCN1B), beta-2 (SCN2B), beta-3 (SCN3B) and beta-4 (SCN4B) subunits. SCN1B and SCN3B are non-covalently associated with SCN9A. SCN2B and SCN4B are disulfide-linked to SCN9A. SCN1B regulates channel inactivation. Interacts with NEDD4 and NEDD4L; regulates Nav1.7 activity most probably through ubiquitination and subsequent endocytosis. Interacts with TMEM233; modulates the gating properties of NaV1.7. In terms of processing, phosphorylation at Ser-1488 by PKC in a highly conserved cytoplasmic loop increases peak sodium currents. Post-translationally, ubiquitinated by NEDD4L; which may promote its endocytosis. Does not seem to be ubiquitinated by NEDD4. Ubiquitinated by NEDD4L; which may promote its endocytosis. As to expression, expressed at high level in the dorsal root ganglion and at much lower levels in the brain, sciatic nerve, nodose ganglia, heart, thyroid and adrenal glands and Schwann cells, but not in the cardiac and skeletal muscles, brain and liver.

It is found in the cell membrane. The protein localises to the cell projection. Its subcellular location is the neuron projection. The protein resides in the axon. It catalyses the reaction Na(+)(in) = Na(+)(out). Inhibited by the conotoxin GVIIJ. Functionally, pore-forming subunit of Nav1.7, a voltage-gated sodium (Nav) channel that directly mediates the depolarizing phase of action potentials in excitable membranes. Navs, also called VGSCs (voltage-gated sodium channels) or VDSCs (voltage-dependent sodium channels), operate by switching between closed and open conformations depending on the voltage difference across the membrane. In the open conformation they allow Na(+) ions to selectively pass through the pore, along their electrochemical gradient. The influx of Na(+) ions provokes membrane depolarization, initiating the propagation of electrical signals throughout cells and tissues. Nav1.7 plays a crucial role in controlling the excitability and action potential propagation from nociceptor neurons, thereby contributing to the sensory perception of pain. This is Sodium channel protein type 9 subunit alpha from Rattus norvegicus (Rat).